A 241-amino-acid polypeptide reads, in one-letter code: 1-(5-phosphoribosyl)-5-[(5-phosphoribosylamino)methylideneamino] imidazole-4-carboxamide isomerase (241 aa).

D8 functions as the Proton acceptor in the catalytic mechanism. The active-site Proton donor is the D131.

Belongs to the HisA/HisF family.

Its subcellular location is the cytoplasm. It carries out the reaction 1-(5-phospho-beta-D-ribosyl)-5-[(5-phospho-beta-D-ribosylamino)methylideneamino]imidazole-4-carboxamide = 5-[(5-phospho-1-deoxy-D-ribulos-1-ylimino)methylamino]-1-(5-phospho-beta-D-ribosyl)imidazole-4-carboxamide. It functions in the pathway amino-acid biosynthesis; L-histidine biosynthesis; L-histidine from 5-phospho-alpha-D-ribose 1-diphosphate: step 4/9. This is 1-(5-phosphoribosyl)-5-[(5-phosphoribosylamino)methylideneamino] imidazole-4-carboxamide isomerase from Sorangium cellulosum (strain So ce56) (Polyangium cellulosum (strain So ce56)).